The chain runs to 1408 residues: ABC transporter B family member 20 (1408 aa).

The interval 14-49 (HMQPLTPVSEVSEPPESPSPYLDPGAESGGGTGTAA) is disordered. The segment covering 20 to 39 (PVSEVSEPPESPSPYLDPGA) has biased composition (low complexity). The helical transmembrane segment at 86–106 (VLMIVGSVAAAAHGTALIVYL) threads the bilayer. The region spanning 88 to 381 (MIVGSVAAAA…AATNFYSFDQ (294 aa)) is the ABC transmembrane type-1 1 domain. The N-linked (GlcNAc...) asparagine glycan is linked to Asn-120. 3 consecutive transmembrane segments (helical) span residues 141–161 (IVYI…CWIL), 214–233 (VGNY…IGFV), and 238–260 (IALI…NIFL). An N-linked (GlcNAc...) asparagine glycan is attached at Asn-293. 2 consecutive transmembrane segments (helical) span residues 312–332 (GILI…LAIC) and 353–373 (GEII…NQAA). The ABC transporter 1 domain maps to 414 to 649 (IEFRNVYFSY…GGLYAELLKC (236 aa)). 449–456 (GRNGSGKS) provides a ligand contact to ATP. Asn-451 is a glycosylation site (N-linked (GlcNAc...) asparagine). 2 disordered regions span residues 676-735 (SSAG…SLDC) and 752-816 (LPHL…DAQH). Over residues 762–771 (CPQQKSNGSE) the composition is skewed to polar residues. N-linked (GlcNAc...) asparagine glycosylation occurs at Asn-768. Basic and acidic residues predominate over residues 802 to 816 (DDTKANGKASKDAQH). One can recognise an ABC transmembrane type-1 2 domain in the interval 836–1124 (AVLGSLGAAI…PFGLAPYILK (289 aa)). 6 consecutive transmembrane segments (helical) span residues 841-861 (LGAA…ALVV), 881-901 (LIIA…HFYF), 959-979 (IFIQ…LLGW), 983-1003 (LVAL…KLWL), 1062-1082 (IGFA…LLLW), and 1103-1123 (MVFS…PYIL). The ABC transporter 2 domain maps to 1159–1396 (IELKNVDFCY…NGLYVRLMQP (238 aa)). Asn-1179 carries an N-linked (GlcNAc...) asparagine glycan. Position 1194 to 1201 (1194 to 1201 (GVSGSGKS)) interacts with ATP. N-linked (GlcNAc...) asparagine glycosylation is found at Asn-1261 and Asn-1347.

Belongs to the ABC transporter superfamily. ABCB family. Multidrug resistance exporter (TC 3.A.1.201) subfamily. As to expression, expressed in aerial tissues.

The protein resides in the membrane. It carries out the reaction (indol-3-yl)acetate(in) + ATP + H2O = (indol-3-yl)acetate(out) + ADP + phosphate + H(+). Functionally, probable auxin efflux transporter that contributes, together with ABCB6 and in a FKBP42/TWD1-dependent manner, to the regulation of leaf position and morphology, internode distribution, roots development, and inflorescence organization, probably by modulating auxin repartition. This Arabidopsis thaliana (Mouse-ear cress) protein is ABC transporter B family member 20.